We begin with the raw amino-acid sequence, 507 residues long: Cobyric acid synthase (507 aa).

Positions 249–451 (DIEIAVINLP…IHGIFENREF (203 aa)) constitute a GATase cobBQ-type domain. The active-site Nucleophile is the C330. Residue H443 is part of the active site.

Belongs to the CobB/CobQ family. CobQ subfamily.

It functions in the pathway cofactor biosynthesis; adenosylcobalamin biosynthesis. Its function is as follows. Catalyzes amidations at positions B, D, E, and G on adenosylcobyrinic A,C-diamide. NH(2) groups are provided by glutamine, and one molecule of ATP is hydrogenolyzed for each amidation. This chain is Cobyric acid synthase, found in Thermoanaerobacter sp. (strain X514).